The following is a 410-amino-acid chain: NADH-quinone oxidoreductase subunit H (410 aa).

Helical transmembrane passes span 16–36 (LILAKSLGVFVFLLLTVLAAI), 84–104 (WIYLAAPVISVIPAFMAFAVI), 124–144 (LPVAVLYILAVTSIGVYGIVL), 165–185 (VISYEIAMALSFVAVFIYAGT), 198–218 (VWFIFLLLPSFLVYLTSMVGE), 260–280 (VSALATTLFLGGWHAPWPISI), 288–308 (WWPLLWFTAKVWLFLFFFMWL), 320–340 (FMRLGWKLLIPVSLAWIAIVA), and 353–373 (WVTALIGVAGVAAILASLLAW). The tract at residues 384-410 (SHSPPAQSSDHGAFPVPPLPVKEPADA) is disordered.

The protein belongs to the complex I subunit 1 family. As to quaternary structure, NDH-1 is composed of 14 different subunits. Subunits NuoA, H, J, K, L, M, N constitute the membrane sector of the complex.

The protein resides in the cell membrane. The catalysed reaction is a quinone + NADH + 5 H(+)(in) = a quinol + NAD(+) + 4 H(+)(out). In terms of biological role, NDH-1 shuttles electrons from NADH, via FMN and iron-sulfur (Fe-S) centers, to quinones in the respiratory chain. The immediate electron acceptor for the enzyme in this species is believed to be menaquinone. Couples the redox reaction to proton translocation (for every two electrons transferred, four hydrogen ions are translocated across the cytoplasmic membrane), and thus conserves the redox energy in a proton gradient. This chain is NADH-quinone oxidoreductase subunit H, found in Mycolicibacterium gilvum (strain PYR-GCK) (Mycobacterium gilvum (strain PYR-GCK)).